We begin with the raw amino-acid sequence, 302 residues long: MISNGQAFFQAPSYLFTPIKLNLALHVVGQRADGYHLIESLVYFSLSGDCLSCTPFGSNRFVLTGPFADELVSDAENLVVRAHDFMCNTFPECAKPAFFQLVKLLPVASGVGGGSGNAAGVLSLLRQQWALDCSCEKLAEMSLVLGADVPMCLFALEYQQPLFVKGIGQDITRLKEACSLAMVLVNHGQQIATKTVFKALEKRDHPPLKIDSAALKTVDSLVEALQETRNDLFVPALKIAPQLSEVLCALDESGALFSRMSGTGATCFGIFKDKQAAQQAALFIKAMYPDWFVKPIVTLAKL.

Residue K20 is part of the active site. 106-116 (PVASGVGGGSG) is an ATP binding site. D148 is an active-site residue.

Belongs to the GHMP kinase family. IspE subfamily.

It catalyses the reaction 4-CDP-2-C-methyl-D-erythritol + ATP = 4-CDP-2-C-methyl-D-erythritol 2-phosphate + ADP + H(+). It participates in isoprenoid biosynthesis; isopentenyl diphosphate biosynthesis via DXP pathway; isopentenyl diphosphate from 1-deoxy-D-xylulose 5-phosphate: step 3/6. In terms of biological role, catalyzes the phosphorylation of the position 2 hydroxy group of 4-diphosphocytidyl-2C-methyl-D-erythritol. The sequence is that of 4-diphosphocytidyl-2-C-methyl-D-erythritol kinase from Bartonella henselae (strain ATCC 49882 / DSM 28221 / CCUG 30454 / Houston 1) (Rochalimaea henselae).